Here is a 275-residue protein sequence, read N- to C-terminus: Diaminopimelate epimerase (275 aa).

Substrate is bound by residues asparagine 12, glutamine 45, and asparagine 65. Cysteine 74 functions as the Proton donor in the catalytic mechanism. Substrate-binding positions include 75 to 76, asparagine 158, asparagine 191, and 209 to 210; these read GN and ER. The active-site Proton acceptor is the cysteine 218. Residue 219-220 coordinates substrate; sequence GS.

The protein belongs to the diaminopimelate epimerase family. As to quaternary structure, homodimer.

Its subcellular location is the cytoplasm. It carries out the reaction (2S,6S)-2,6-diaminopimelate = meso-2,6-diaminopimelate. Its pathway is amino-acid biosynthesis; L-lysine biosynthesis via DAP pathway; DL-2,6-diaminopimelate from LL-2,6-diaminopimelate: step 1/1. In terms of biological role, catalyzes the stereoinversion of LL-2,6-diaminopimelate (L,L-DAP) to meso-diaminopimelate (meso-DAP), a precursor of L-lysine and an essential component of the bacterial peptidoglycan. The polypeptide is Diaminopimelate epimerase (Shewanella amazonensis (strain ATCC BAA-1098 / SB2B)).